Reading from the N-terminus, the 351-residue chain is S-adenosylmethionine:tRNA ribosyltransferase-isomerase (351 aa).

The protein belongs to the QueA family. As to quaternary structure, monomer.

The protein resides in the cytoplasm. It carries out the reaction 7-aminomethyl-7-carbaguanosine(34) in tRNA + S-adenosyl-L-methionine = epoxyqueuosine(34) in tRNA + adenine + L-methionine + 2 H(+). Its pathway is tRNA modification; tRNA-queuosine biosynthesis. Functionally, transfers and isomerizes the ribose moiety from AdoMet to the 7-aminomethyl group of 7-deazaguanine (preQ1-tRNA) to give epoxyqueuosine (oQ-tRNA). The chain is S-adenosylmethionine:tRNA ribosyltransferase-isomerase from Photobacterium profundum (strain SS9).